We begin with the raw amino-acid sequence, 505 residues long: Amidophosphoribosyltransferase (505 aa).

Catalysis depends on Cys-2, which acts as the Nucleophile. In terms of domain architecture, Glutamine amidotransferase type-2 spans 2 to 236 (CGIVGIAGVM…PGEAIYITEE (235 aa)). Mg(2+) contacts are provided by Thr-305, Asp-367, and Asp-368.

The protein in the C-terminal section; belongs to the purine/pyrimidine phosphoribosyltransferase family. As to quaternary structure, homotetramer. Mg(2+) serves as cofactor.

It carries out the reaction 5-phospho-beta-D-ribosylamine + L-glutamate + diphosphate = 5-phospho-alpha-D-ribose 1-diphosphate + L-glutamine + H2O. It participates in purine metabolism; IMP biosynthesis via de novo pathway; N(1)-(5-phospho-D-ribosyl)glycinamide from 5-phospho-alpha-D-ribose 1-diphosphate: step 1/2. With respect to regulation, inhibited by iodoacetamide and by the glutamine analogs chloroketone and DON. Its function is as follows. Catalyzes the formation of phosphoribosylamine from phosphoribosylpyrophosphate (PRPP) and glutamine. Can also use NH(3) in place of glutamine. The sequence is that of Amidophosphoribosyltransferase from Escherichia coli (strain K12).